A 57-amino-acid polypeptide reads, in one-letter code: Phosphatase RapH inhibitor (57 aa).

2 propeptides span residues 1–34 (MPIKKKVMMCLAVTLVFGSMSFPTLTNSGGFKES) and 41–57 (YIDHSPYKLSDQKKALS). Residues 26–57 (TNSGGFKESTDRNTTYIDHSPYKLSDQKKALS) are disordered.

This sequence belongs to the Phr family. In terms of processing, contains a predicted signal peptide cleavage site in the N-terminal region, however the propeptide is probably only subject to processing events at the ends of the mature peptide.

The protein resides in the secreted. The protein localises to the cytoplasm. Its function is as follows. Signaling molecule involved the regulation of both sporulation and competence. Secreted during production, but the mature peptide acts intracellularly, indicating that it needs to be imported into the cell to function. Acts by inhibiting RapH activity. Can inhibit both RapH activities, the dephosphorylation of Spo0F and the sequestration of ComA. The sequence is that of Phosphatase RapH inhibitor (phrH) from Bacillus subtilis (strain 168).